The following is a 354-amino-acid chain: UPF0496 protein At4g34330 (354 aa).

The next 2 helical transmembrane spans lie at 200–220 (IIFMATFATLVICSVLAATMA) and 222–242 (PHVAAALAAATPPVGSMGKWI). Residues 270 to 341 (AVQDLNNIKD…CSTDIRRART (72 aa)) adopt a coiled-coil conformation.

Belongs to the UPF0496 family.

The protein resides in the membrane. This Arabidopsis thaliana (Mouse-ear cress) protein is UPF0496 protein At4g34330.